The primary structure comprises 301 residues: N-acetylmuramic acid 6-phosphate etherase (301 aa).

Positions 57 to 220 (IAEAFRQGGR…TTGAMIRTGK (164 aa)) constitute an SIS domain. The active-site Proton donor is the glutamate 85. Glutamate 116 is an active-site residue.

Belongs to the GCKR-like family. MurNAc-6-P etherase subfamily. In terms of assembly, homodimer.

It catalyses the reaction N-acetyl-D-muramate 6-phosphate + H2O = N-acetyl-D-glucosamine 6-phosphate + (R)-lactate. Its pathway is amino-sugar metabolism; 1,6-anhydro-N-acetylmuramate degradation. It participates in amino-sugar metabolism; N-acetylmuramate degradation. The protein operates within cell wall biogenesis; peptidoglycan recycling. In terms of biological role, specifically catalyzes the cleavage of the D-lactyl ether substituent of MurNAc 6-phosphate, producing GlcNAc 6-phosphate and D-lactate. Together with AnmK, is also required for the utilization of anhydro-N-acetylmuramic acid (anhMurNAc) either imported from the medium or derived from its own cell wall murein, and thus plays a role in cell wall recycling. The polypeptide is N-acetylmuramic acid 6-phosphate etherase (Photorhabdus laumondii subsp. laumondii (strain DSM 15139 / CIP 105565 / TT01) (Photorhabdus luminescens subsp. laumondii)).